The sequence spans 489 residues: Probable cytosol aminopeptidase (489 aa).

The Mn(2+) site is built by Lys-254 and Asp-259. The active site involves Lys-266. Residues Asp-277, Asp-336, and Glu-338 each contribute to the Mn(2+) site. The active site involves Arg-340.

Belongs to the peptidase M17 family. It depends on Mn(2+) as a cofactor.

It localises to the cytoplasm. The catalysed reaction is Release of an N-terminal amino acid, Xaa-|-Yaa-, in which Xaa is preferably Leu, but may be other amino acids including Pro although not Arg or Lys, and Yaa may be Pro. Amino acid amides and methyl esters are also readily hydrolyzed, but rates on arylamides are exceedingly low.. The enzyme catalyses Release of an N-terminal amino acid, preferentially leucine, but not glutamic or aspartic acids.. Its function is as follows. Presumably involved in the processing and regular turnover of intracellular proteins. Catalyzes the removal of unsubstituted N-terminal amino acids from various peptides. The protein is Probable cytosol aminopeptidase of Cereibacter sphaeroides (strain ATCC 17025 / ATH 2.4.3) (Rhodobacter sphaeroides).